A 316-amino-acid chain; its full sequence is Ester hydrolase C11orf54 homolog (316 aa).

Residues His267, His269, and His279 each coordinate Zn(2+).

In terms of assembly, monomer. Requires Zn(2+) as cofactor.

The protein localises to the nucleus. Its subcellular location is the cytoplasm. Its function is as follows. Exhibits ester hydrolase activity on the substrate p-nitrophenyl acetate, in vitro. May regulate DNA damage and repair by regulating HIF1A degradation via chaperone-mediated autophagy (CMA). The protein is Ester hydrolase C11orf54 homolog of Xenopus laevis (African clawed frog).